Here is a 620-residue protein sequence, read N- to C-terminus: Glutathione-regulated potassium-efflux system protein KefC (620 aa).

The next 12 helical transmembrane spans lie at 4–24 (HTLM…PIAV), 26–46 (LGLG…PWGL), 54–74 (SILH…GLEL), 90–110 (GALQ…FLGL), 114–134 (VAEL…MQAM), 149–169 (FAVL…IPLL), 178–198 (LGAF…VVLL), 218–238 (VFSA…EEVG), 270–290 (GLLL…GTLV), 294–314 (LRIL…LWLI), 327–347 (WFAV…GAAQ), and 359–379 (ALTL…VLLT). An RCK N-terminal domain is found at 399–518 (QPRVIVAGFG…AGVAMPERET (120 aa)). The tract at residues 599-620 (QGTAEGKHTGDIADEPQVKPST) is disordered.

It belongs to the monovalent cation:proton antiporter 2 (CPA2) transporter (TC 2.A.37) family. KefC subfamily. In terms of assembly, homodimer. Interacts with the regulatory subunit KefF.

It is found in the cell inner membrane. In terms of biological role, pore-forming subunit of a potassium efflux system that confers protection against electrophiles. Catalyzes K(+)/H(+) antiport. The chain is Glutathione-regulated potassium-efflux system protein KefC from Salmonella arizonae (strain ATCC BAA-731 / CDC346-86 / RSK2980).